A 107-amino-acid polypeptide reads, in one-letter code: Pre-mRNA-splicing factor RDS3 (107 aa).

It belongs to the PHF5 family. In terms of assembly, component of the spliceosome where it interacts with CUS1, HSH49, HSH155, IST3 and RSE1. Also interacts with YRA1.

It is found in the nucleus. Its function is as follows. Required for pre-mRNA splicing. Involved in regulation of drug sensitivity and may play a role in multidrug resistance. This Saccharomyces cerevisiae (strain ATCC 204508 / S288c) (Baker's yeast) protein is Pre-mRNA-splicing factor RDS3 (RDS3).